A 670-amino-acid polypeptide reads, in one-letter code: DNA ligase (670 aa).

NAD(+) contacts are provided by residues 32-36 (DAEYD), 81-82 (SL), and E113. K115 (N6-AMP-lysine intermediate) is an active-site residue. Residues R136, E173, K290, and K314 each contribute to the NAD(+) site. The Zn(2+) site is built by C408, C411, C426, and C432. One can recognise a BRCT domain in the interval 592–670 (EIDSPFAGKT…EAEMIRLLGE (79 aa)).

This sequence belongs to the NAD-dependent DNA ligase family. LigA subfamily. It depends on Mg(2+) as a cofactor. Mn(2+) is required as a cofactor.

The enzyme catalyses NAD(+) + (deoxyribonucleotide)n-3'-hydroxyl + 5'-phospho-(deoxyribonucleotide)m = (deoxyribonucleotide)n+m + AMP + beta-nicotinamide D-nucleotide.. In terms of biological role, DNA ligase that catalyzes the formation of phosphodiester linkages between 5'-phosphoryl and 3'-hydroxyl groups in double-stranded DNA using NAD as a coenzyme and as the energy source for the reaction. It is essential for DNA replication and repair of damaged DNA. In Yersinia pseudotuberculosis serotype IB (strain PB1/+), this protein is DNA ligase.